Here is a 232-residue protein sequence, read N- to C-terminus: Ribosome maturation protein SDO1 homolog (232 aa).

The protein belongs to the SDO1/SBDS family.

This Methanothermobacter thermautotrophicus (strain ATCC 29096 / DSM 1053 / JCM 10044 / NBRC 100330 / Delta H) (Methanobacterium thermoautotrophicum) protein is Ribosome maturation protein SDO1 homolog.